A 373-amino-acid chain; its full sequence is Forkhead box protein E1 (373 aa).

Residues 19-51 form a disordered region; sequence KEERGETAAGAGVPGEATGRGAGGRRRKRPLQR. The segment covering 41–50 has biased composition (basic residues); it reads GGRRRKRPLQ. A DNA-binding region (fork-head) is located at residues 53-147; sequence KPPYSYIALI…ESGSFLRRRK (95 aa).

Phosphorylated. Detected in adult brain, placenta, lung, liver, skeletal muscle, kidney, pancreas, heart, colon, small intestine testis and thymus. Expression was strongest in heart and pancreas.

The protein localises to the nucleus. Its function is as follows. Transcription factor that binds consensus sites on a variety of gene promoters and activate their transcription. Involved in proper palate formation, most probably through the expression of MSX1 and TGFB3 genes which are direct targets of this transcription factor. Also implicated in thyroid gland morphogenesis. May indirectly play a role in cell growth and migration through the regulation of WNT5A expression. In Homo sapiens (Human), this protein is Forkhead box protein E1 (FOXE1).